The following is a 752-amino-acid chain: MSRRVFASAVLLLIVVTMCCGGAATAQVGSNADASTPGSALTGAIAGEGSSSGGVEGLQRVDLFVPQKTQVLPKKGPDSSRRDSFFSPSLVSAGGVIAAFAEGHINTKNPHNESAKPFSDVVAGYIDSAWEWPTLVEKVSESTWQAHTVLGKAEGKKSLDVVLRPTTTTKGNKVFLLAGSTDLSYVNWSWREGSLELKLVVGDVTKPTSSEPTERIKWGEIKSLLNESTIAAQKGKLTEFLASGGSGVVMEDGTIVFSLMAVNEKKDGVFSLIIYSKDNGSTWSLSEGISPAKCGAPRITEWEGSLLMIVDCENDQRVYVSRDMGTTWTEAIGTLSGVGSTHNWETIGRRLAVEALITVTIEGRKVMLYTQRGYALGETETTSPLYLWVTDNNRSFFVGPVGMDNAVKGELAGALLYSDGGLHLLQRRDSGEDSVMSLSRLTEELKEIKSVLSTWSQKDVFFSSLSIPTVGLVAVLSDAAGDGRWYDEYLCLNATVTNATKVKDGFQLTEPDSRAVWSVNIPDGNVRHISLSHNFTLVASVIIEEAPSGNTPLLTAVLVDAGPEYFMRLSYTADNKWMTMLKDEKKPTTESRPWEAGKEHQVALMLQGNKASVYVDGELLGEEEVPLTGEKPLEIFAFCFGACKIDGDEEESSPKEIGKKPRVTVTNVFLYNRPLNSTEMRAIKDRIPVPTRAPEPQVKIAPKPAAPAAPAGNEETARETGDGGANGDAVSAYGRVLLPLLFLLGLWGLATA.

Residues 1–23 form the signal peptide; sequence MSRRVFASAVLLLIVVTMCCGGA. 2 BNR repeats span residues 274–285 and 319–330; these read IYSKDNGSTWSL and YVSRDMGTTWTE. The disordered stretch occupies residues 693–725; the sequence is APEPQVKIAPKPAAPAAPAGNEETARETGDGGA. Positions 701–711 are enriched in low complexity; it reads APKPAAPAAPA.

The protein belongs to the glycosyl hydrolase 33 family.

The catalysed reaction is Hydrolysis of alpha-(2-&gt;3)-, alpha-(2-&gt;6)-, alpha-(2-&gt;8)- glycosidic linkages of terminal sialic acid residues in oligosaccharides, glycoproteins, glycolipids, colominic acid and synthetic substrates.. Developmentally regulated neuraminidase implicated in parasite invasion of cells. May contribute to the pathology during T.cruzi infection by cleaving sialic acid from cells of the immune system. The protein is Sialidase 85-1.1 (SA85-1.1) of Trypanosoma cruzi.